The sequence spans 403 residues: Propionate kinase (403 aa).

It belongs to the acetokinase family. PduW subfamily.

It localises to the cytoplasm. It catalyses the reaction propanoate + ATP = propanoyl phosphate + ADP. It participates in polyol metabolism; 1,2-propanediol degradation. Works with phosphate acetyltransferase (pta) to capture exogenous propionate and regenerate propionyl-CoA during degradation of 1,2-propanediol (1,2-PD). The sequence is that of Propionate kinase from Citrobacter rodentium (strain ICC168) (Citrobacter freundii biotype 4280).